Here is a 195-residue protein sequence, read N- to C-terminus: Segregation and condensation protein B (195 aa).

The tract at residues 169–195 is disordered; sequence LEDVAASQENSREAGGRGSIPGHPGEE.

This sequence belongs to the ScpB family. As to quaternary structure, homodimer. Homodimerization may be required to stabilize the binding of ScpA to the Smc head domains. Component of a cohesin-like complex composed of ScpA, ScpB and the Smc homodimer, in which ScpA and ScpB bind to the head domain of Smc. The presence of the three proteins is required for the association of the complex with DNA.

It is found in the cytoplasm. Functionally, participates in chromosomal partition during cell division. May act via the formation of a condensin-like complex containing Smc and ScpA that pull DNA away from mid-cell into both cell halves. The polypeptide is Segregation and condensation protein B (Moorella thermoacetica (strain ATCC 39073 / JCM 9320)).